The sequence spans 674 residues: Zinc finger protein 750 (674 aa).

Residues 25–51 (YKCFQCPFTCNEKSHLFNHMKYGLCKN) form a CCHC-type zinc finger. The Zn(2+) site is built by cysteine 27, cysteine 30, histidine 43, and cysteine 49. Disordered stretches follow at residues 105-125 (EAKENLDLKNEPKSHAEKTTV), 370-466 (LAKN…QSHS), and 594-674 (TSSP…PRVS). Polar residues-rich tracts occupy residues 401–411 (SPTNFTQSSQG) and 444–466 (DSQTIISRENSPSFGNDGVQSHS).

The protein localises to the nucleus. Functionally, transcription factor involved in epidermis differentiation. The chain is Zinc finger protein 750 (znf750) from Xenopus laevis (African clawed frog).